A 541-amino-acid chain; its full sequence is Carboxypeptidase Y homolog A (541 aa).

Residues 1–17 (MKLLMTGLLASAAVAAA) form the signal peptide. Positions 18-122 (QEQQVLQAEG…KLQSYDLRVK (105 aa)) are excised as a propeptide. 5 cysteine pairs are disulfide-bonded: Cys177–Cys417, Cys311–Cys325, Cys335–Cys358, Cys342–Cys351, and Cys380–Cys387. Residue Asn208 is glycosylated (N-linked (GlcNAc...) asparagine). Residue Ser264 is part of the active site. Asp456 is an active-site residue. Asn507 carries N-linked (GlcNAc...) asparagine glycosylation. His518 is an active-site residue.

This sequence belongs to the peptidase S10 family.

Its subcellular location is the vacuole. The catalysed reaction is Release of a C-terminal amino acid with broad specificity.. Its function is as follows. Vacuolar carboxypeptidase involved in degradation of small peptides. Digests preferentially peptides containing an aliphatic or hydrophobic residue in P1' position, as well as methionine, leucine or phenylalanine in P1 position of ester substrate. The chain is Carboxypeptidase Y homolog A (CPYA) from Arthroderma otae (strain ATCC MYA-4605 / CBS 113480) (Microsporum canis).